Here is a 338-residue protein sequence, read N- to C-terminus: Ketol-acid reductoisomerase (NADP(+)) (338 aa).

The region spanning 1-181 is the KARI N-terminal Rossmann domain; it reads MRVFYDKDCD…GGGRTGIIET (181 aa). NADP(+)-binding positions include 24 to 27, R47, S50, T52, and 82 to 85; these read YGSQ and DEFQ. H107 is an active-site residue. G133 lines the NADP(+) pocket. One can recognise a KARI C-terminal knotted domain in the interval 182-327; it reads TFKDETETDL…EKLRAMMPWI (146 aa). Residues D190, E194, E226, and E230 each contribute to the Mg(2+) site. Substrate is bound at residue S251.

The protein belongs to the ketol-acid reductoisomerase family. Mg(2+) serves as cofactor.

It catalyses the reaction (2R)-2,3-dihydroxy-3-methylbutanoate + NADP(+) = (2S)-2-acetolactate + NADPH + H(+). The catalysed reaction is (2R,3R)-2,3-dihydroxy-3-methylpentanoate + NADP(+) = (S)-2-ethyl-2-hydroxy-3-oxobutanoate + NADPH + H(+). It participates in amino-acid biosynthesis; L-isoleucine biosynthesis; L-isoleucine from 2-oxobutanoate: step 2/4. Its pathway is amino-acid biosynthesis; L-valine biosynthesis; L-valine from pyruvate: step 2/4. In terms of biological role, involved in the biosynthesis of branched-chain amino acids (BCAA). Catalyzes an alkyl-migration followed by a ketol-acid reduction of (S)-2-acetolactate (S2AL) to yield (R)-2,3-dihydroxy-isovalerate. In the isomerase reaction, S2AL is rearranged via a Mg-dependent methyl migration to produce 3-hydroxy-3-methyl-2-ketobutyrate (HMKB). In the reductase reaction, this 2-ketoacid undergoes a metal-dependent reduction by NADPH to yield (R)-2,3-dihydroxy-isovalerate. The polypeptide is Ketol-acid reductoisomerase (NADP(+)) (Pseudomonas paraeruginosa (strain DSM 24068 / PA7) (Pseudomonas aeruginosa (strain PA7))).